The chain runs to 173 residues: MNDLRYPIGQFTYKRPITEEMIDTWIQEIEDLPNELTKAIKDLDQKQLDTPYRVGGWTVRQVVHHVVDSHMNSYIRFKLALTEKNPTIKPYKEEKWAELPDSKLPVDVSLVMLESLHKRWVNLLYSLELEDLEKTFNHPETGETKLAAAIGLYAWHGRHHTAHITSLRKRLNW.

Zn(2+) contacts are provided by histidine 65, histidine 156, and histidine 160.

This sequence belongs to the metal hydrolase YfiT family. Homodimer. Zn(2+) serves as cofactor.

The protein resides in the cytoplasm. Possible metal-dependent hydrolase. The sequence is that of Putative metal-dependent hydrolase BT9727_2476 from Bacillus thuringiensis subsp. konkukian (strain 97-27).